The chain runs to 260 residues: Metallo-beta-lactamase domain-containing protein 1 (260 aa).

Zn(2+) contacts are provided by H118, H120, D122, H123, H173, D196, and H235.

It belongs to the metallo-beta-lactamase superfamily. Glyoxalase II family. Homodimer. Zn(2+) is required as a cofactor.

The protein resides in the cytoplasm. The protein localises to the cytosol. It is found in the nucleus. It catalyses the reaction a ribonucleotidyl-ribonucleotide-RNA + H2O = a 3'-end ribonucleotide-RNA + a 5'-end 5'-phospho-ribonucleoside-RNA + H(+). In terms of biological role, endoribonuclease that catalyzes the hydrolysis of histone-coding pre-mRNA 3'-end. Involved in histone pre-mRNA processing during the S-phase of the cell cycle, which is required for entering/progressing through S-phase. Cleaves histone pre-mRNA at a major and a minor cleavage site after the 5'-ACCCA-3' and the 5'-ACCCACA-3' sequence, respectively, and located downstream of the stem-loop. May require the presence of the HDE element located at the histone pre-RNA 3'-end to avoid non-specific cleavage. This chain is Metallo-beta-lactamase domain-containing protein 1, found in Mus musculus (Mouse).